We begin with the raw amino-acid sequence, 271 residues long: Glutamate racemase (271 aa).

Residues 10-11 and 42-43 each bind substrate; these read DS and YG. The Proton donor/acceptor role is filled by Cys-73. Substrate is bound at residue 74–75; that stretch reads NS. The active-site Proton donor/acceptor is the Cys-183. Residue 184–185 coordinates substrate; that stretch reads TH.

This sequence belongs to the aspartate/glutamate racemases family.

It carries out the reaction L-glutamate = D-glutamate. Its pathway is cell wall biogenesis; peptidoglycan biosynthesis. Functionally, provides the (R)-glutamate required for cell wall biosynthesis. The chain is Glutamate racemase from Saccharopolyspora erythraea (strain ATCC 11635 / DSM 40517 / JCM 4748 / NBRC 13426 / NCIMB 8594 / NRRL 2338).